The chain runs to 212 residues: Elongation factor Ts (212 aa).

The tract at residues 82-85 (SDFV) is involved in Mg(2+) ion dislocation from EF-Tu.

This sequence belongs to the EF-Ts family.

The protein localises to the cytoplasm. Its function is as follows. Associates with the EF-Tu.GDP complex and induces the exchange of GDP to GTP. It remains bound to the aminoacyl-tRNA.EF-Tu.GTP complex up to the GTP hydrolysis stage on the ribosome. The polypeptide is Elongation factor Ts (Solibacter usitatus (strain Ellin6076)).